A 275-amino-acid polypeptide reads, in one-letter code: 3-methyl-2-oxobutanoate hydroxymethyltransferase (275 aa).

Mg(2+) contacts are provided by Asp-44 and Asp-83. Residues 44–45, Asp-83, and Lys-113 each bind 3-methyl-2-oxobutanoate; that span reads DS. Glu-115 contributes to the Mg(2+) binding site. Glu-182 serves as the catalytic Proton acceptor.

This sequence belongs to the PanB family. In terms of assembly, homodecamer; pentamer of dimers. Requires Mg(2+) as cofactor.

The protein localises to the cytoplasm. The enzyme catalyses 3-methyl-2-oxobutanoate + (6R)-5,10-methylene-5,6,7,8-tetrahydrofolate + H2O = 2-dehydropantoate + (6S)-5,6,7,8-tetrahydrofolate. It participates in cofactor biosynthesis; (R)-pantothenate biosynthesis; (R)-pantoate from 3-methyl-2-oxobutanoate: step 1/2. Catalyzes the reversible reaction in which hydroxymethyl group from 5,10-methylenetetrahydrofolate is transferred onto alpha-ketoisovalerate to form ketopantoate. This is 3-methyl-2-oxobutanoate hydroxymethyltransferase from Clostridioides difficile (strain 630) (Peptoclostridium difficile).